We begin with the raw amino-acid sequence, 739 residues long: Poly(A) polymerase gamma (739 aa).

An N6-acetyllysine modification is found at Lys2. Ser23 is subject to Phosphoserine. ATP contacts are provided by residues 99-101 (FGS), Thr108, 112-114 (DID), Asp166, Lys227, Tyr236, and 245-246 (GV). 3 residues coordinate Mg(2+): Asp112, Asp114, and Asp166. The disordered stretch occupies residues 506–566 (KSLSDVSRSS…PTGEIERSSA (61 aa)). 2 stretches are compositionally biased toward polar residues: residues 509 to 531 (SDVS…TCLD) and 538 to 556 (SGTP…NPDS). Ser524 is subject to Phosphoserine. Ser602 and Ser651 each carry phosphoserine. Thr657 bears the Phosphothreonine mark. The segment covering 677-688 (SRAAEDRKRKPM) has biased composition (basic and acidic residues). The disordered stretch occupies residues 677 to 725 (SRAAEDRKRKPMDSIGGESMPIPTIDTARKKRLPSKELPDSSSPVPANN). Ser711 carries the post-translational modification Phosphoserine.

This sequence belongs to the poly(A) polymerase family. The cofactor is Mg(2+). It depends on Mn(2+) as a cofactor.

The protein localises to the nucleus. The enzyme catalyses RNA(n) + ATP = RNA(n)-3'-adenine ribonucleotide + diphosphate. Functionally, responsible for the post-transcriptional adenylation of the 3'-terminal of mRNA precursors and several small RNAs including signal recognition particle (SRP) RNA, nuclear 7SK RNA, U2 small nuclear RNA, and ribosomal 5S RNA. The sequence is that of Poly(A) polymerase gamma (Papolg) from Mus musculus (Mouse).